We begin with the raw amino-acid sequence, 829 residues long: Spindle-defective protein 2 (829 aa).

Disordered regions lie at residues 1-29 (MNEDAPMDLVDDRFADQSIQDEPVDDGES), 41-104 (EDED…SNDI), 183-294 (KKDV…TTSD), and 326-471 (RKKR…NGHM). Residues 54–82 (FRLENRYKPSLHTPRELPTIREENREDVR) show a composition bias toward basic and acidic residues. Residues 83-93 (SNTSSRVNTRP) show a composition bias toward polar residues. Residues 183-216 (KKDVTRKQENVRPGKMMPEKVNDENEPKSRRFSP) are compositionally biased toward basic and acidic residues. 2 stretches are compositionally biased toward polar residues: residues 217-230 (ERNTFTTSPMNSTK) and 266-294 (PQRTSGTPKTYESRHPTNAYTPNSATTSD). Residues 314 to 332 (VDINLLTALENARKKRDRP) adopt a coiled-coil conformation. Composition is skewed to low complexity over residues 361 to 370 (SMTSIVSSST) and 384 to 408 (NSATSTDLTNSNTSNFTNNTSRVST). Polar residues-rich tracts occupy residues 409–439 (AKNDFSRSSRQRNGFSDSSVSTIIPNMNSMT) and 448–463 (SVSSVRTISRASSTMT).

The protein resides in the cytoplasm. The protein localises to the cytoskeleton. It localises to the microtubule organizing center. Its subcellular location is the centrosome. It is found in the centriole. In terms of biological role, required both for centrosome duplication and maturation. Required for pericentriolar material (PCM) recruitment. This is Spindle-defective protein 2 from Caenorhabditis briggsae.